The chain runs to 101 residues: NAD(P)H-quinone oxidoreductase subunit 4L, chloroplastic (101 aa).

A run of 3 helical transmembrane segments spans residues 2-22 (ILEH…YGLI), 32-52 (MCLE…SDFF), and 61-81 (IFCI…LAIV).

It belongs to the complex I subunit 4L family. NDH is composed of at least 16 different subunits, 5 of which are encoded in the nucleus.

It is found in the plastid. It localises to the chloroplast thylakoid membrane. It catalyses the reaction a plastoquinone + NADH + (n+1) H(+)(in) = a plastoquinol + NAD(+) + n H(+)(out). The catalysed reaction is a plastoquinone + NADPH + (n+1) H(+)(in) = a plastoquinol + NADP(+) + n H(+)(out). Its function is as follows. NDH shuttles electrons from NAD(P)H:plastoquinone, via FMN and iron-sulfur (Fe-S) centers, to quinones in the photosynthetic chain and possibly in a chloroplast respiratory chain. The immediate electron acceptor for the enzyme in this species is believed to be plastoquinone. Couples the redox reaction to proton translocation, and thus conserves the redox energy in a proton gradient. The protein is NAD(P)H-quinone oxidoreductase subunit 4L, chloroplastic of Olimarabidopsis pumila (Dwarf rocket).